A 325-amino-acid chain; its full sequence is GMP reductase (325 aa).

Cys-173 functions as the Thioimidate intermediate in the catalytic mechanism. 202–225 contributes to the NADP(+) binding site; that stretch reads IIADGGIRSHGDIAKSVRFGATMV.

It belongs to the IMPDH/GMPR family. GuaC type 2 subfamily.

It carries out the reaction IMP + NH4(+) + NADP(+) = GMP + NADPH + 2 H(+). Functionally, catalyzes the irreversible NADPH-dependent deamination of GMP to IMP. It functions in the conversion of nucleobase, nucleoside and nucleotide derivatives of G to A nucleotides, and in maintaining the intracellular balance of A and G nucleotides. In Acidovorax sp. (strain JS42), this protein is GMP reductase.